A 261-amino-acid polypeptide reads, in one-letter code: Glutamate racemase (261 aa).

Substrate is bound by residues 9–10 (DS) and 41–42 (YG). Catalysis depends on Cys73, which acts as the Proton donor/acceptor. A substrate-binding site is contributed by 74–75 (NT). Cys179 acts as the Proton donor/acceptor in catalysis. Substrate is bound at residue 180 to 181 (TH).

This sequence belongs to the aspartate/glutamate racemases family.

The catalysed reaction is L-glutamate = D-glutamate. It functions in the pathway cell wall biogenesis; peptidoglycan biosynthesis. Its function is as follows. Provides the (R)-glutamate required for cell wall biosynthesis. This is Glutamate racemase from Aliivibrio fischeri (strain MJ11) (Vibrio fischeri).